A 253-amino-acid polypeptide reads, in one-letter code: Type III pantothenate kinase (253 aa).

Position 6–13 (6–13 (DVGNTNIV)) interacts with ATP. 107-110 (GADR) contributes to the substrate binding site. The active-site Proton acceptor is Asp109. Asp129 serves as a coordination point for K(+). Position 132 (Thr132) interacts with ATP. Thr184 contacts substrate.

This sequence belongs to the type III pantothenate kinase family. As to quaternary structure, homodimer. The cofactor is NH4(+). It depends on K(+) as a cofactor.

Its subcellular location is the cytoplasm. It carries out the reaction (R)-pantothenate + ATP = (R)-4'-phosphopantothenate + ADP + H(+). It participates in cofactor biosynthesis; coenzyme A biosynthesis; CoA from (R)-pantothenate: step 1/5. In terms of biological role, catalyzes the phosphorylation of pantothenate (Pan), the first step in CoA biosynthesis. The protein is Type III pantothenate kinase of Exiguobacterium sibiricum (strain DSM 17290 / CCUG 55495 / CIP 109462 / JCM 13490 / 255-15).